The sequence spans 477 residues: ATP synthase subunit beta, chloroplastic (477 aa).

156–163 (GGAGVGKT) is a binding site for ATP.

Belongs to the ATPase alpha/beta chains family. As to quaternary structure, F-type ATPases have 2 components, CF(1) - the catalytic core - and CF(0) - the membrane proton channel. CF(1) has five subunits: alpha(3), beta(3), gamma(1), delta(1), epsilon(1). CF(0) has four main subunits: a(1), b(1), b'(1) and c(9-12).

Its subcellular location is the plastid. The protein localises to the chloroplast thylakoid membrane. It catalyses the reaction ATP + H2O + 4 H(+)(in) = ADP + phosphate + 5 H(+)(out). Functionally, produces ATP from ADP in the presence of a proton gradient across the membrane. The catalytic sites are hosted primarily by the beta subunits. The sequence is that of ATP synthase subunit beta, chloroplastic from Bigelowiella natans (Pedinomonas minutissima).